Reading from the N-terminus, the 478-residue chain is Cytochrome c-552 (478 aa).

An N-terminal signal peptide occupies residues 1-26 (MTRIKINARRIFSLLIPFFFFTSVHA). Residue His-94 participates in heme c binding. Heme-binding residues include Cys-122, Cys-125, and Lys-126. Heme c is bound by residues Cys-160, Cys-163, His-164, Cys-209, Cys-212, and His-213. Glu-215, Tyr-216, Lys-261, and Gln-263 together coordinate Ca(2+). Tyr-216 provides a ligand contact to substrate. His-264 is a substrate binding site. Positions 275, 282, 285, 286, 301, 314, 317, 318, and 393 each coordinate heme c.

The protein belongs to the cytochrome c-552 family. It depends on Ca(2+) as a cofactor. Heme c is required as a cofactor.

It is found in the periplasm. The catalysed reaction is 6 Fe(III)-[cytochrome c] + NH4(+) + 2 H2O = 6 Fe(II)-[cytochrome c] + nitrite + 8 H(+). Its pathway is nitrogen metabolism; nitrate reduction (assimilation). Functionally, catalyzes the reduction of nitrite to ammonia, consuming six electrons in the process. The sequence is that of Cytochrome c-552 from Escherichia coli O157:H7 (strain EC4115 / EHEC).